Consider the following 1342-residue polypeptide: DNA-directed RNA polymerase subunit beta (1342 aa).

Lys-1022 and Lys-1200 each carry N6-acetyllysine.

The protein belongs to the RNA polymerase beta chain family. As to quaternary structure, the RNAP catalytic core consists of 2 alpha, 1 beta, 1 beta' and 1 omega subunit. When a sigma factor is associated with the core the holoenzyme is formed, which can initiate transcription.

The enzyme catalyses RNA(n) + a ribonucleoside 5'-triphosphate = RNA(n+1) + diphosphate. DNA-dependent RNA polymerase catalyzes the transcription of DNA into RNA using the four ribonucleoside triphosphates as substrates. The sequence is that of DNA-directed RNA polymerase subunit beta from Escherichia coli O6:K15:H31 (strain 536 / UPEC).